The sequence spans 368 residues: Probable dual-specificity RNA methyltransferase RlmN (368 aa).

Glu100 acts as the Proton acceptor in catalysis. The region spanning 106–344 (QHYGLSVCVT…CVVRQEHGTD (239 aa)) is the Radical SAM core domain. Cys113 and Cys349 are disulfide-bonded. Residues Cys120, Cys124, and Cys127 each contribute to the [4Fe-4S] cluster site. S-adenosyl-L-methionine-binding positions include 172 to 173 (GE), Ser204, 227 to 229 (SLH), and Asn305. Residue Cys349 is the S-methylcysteine intermediate of the active site.

Belongs to the radical SAM superfamily. RlmN family. It depends on [4Fe-4S] cluster as a cofactor.

The protein resides in the cytoplasm. It carries out the reaction adenosine(2503) in 23S rRNA + 2 reduced [2Fe-2S]-[ferredoxin] + 2 S-adenosyl-L-methionine = 2-methyladenosine(2503) in 23S rRNA + 5'-deoxyadenosine + L-methionine + 2 oxidized [2Fe-2S]-[ferredoxin] + S-adenosyl-L-homocysteine. It catalyses the reaction adenosine(37) in tRNA + 2 reduced [2Fe-2S]-[ferredoxin] + 2 S-adenosyl-L-methionine = 2-methyladenosine(37) in tRNA + 5'-deoxyadenosine + L-methionine + 2 oxidized [2Fe-2S]-[ferredoxin] + S-adenosyl-L-homocysteine. Its function is as follows. Specifically methylates position 2 of adenine 2503 in 23S rRNA and position 2 of adenine 37 in tRNAs. This is Probable dual-specificity RNA methyltransferase RlmN from Streptococcus agalactiae serotype V (strain ATCC BAA-611 / 2603 V/R).